The primary structure comprises 568 residues: Proline--tRNA ligase (568 aa).

It belongs to the class-II aminoacyl-tRNA synthetase family. ProS type 1 subfamily. Homodimer.

It localises to the cytoplasm. It carries out the reaction tRNA(Pro) + L-proline + ATP = L-prolyl-tRNA(Pro) + AMP + diphosphate. Functionally, catalyzes the attachment of proline to tRNA(Pro) in a two-step reaction: proline is first activated by ATP to form Pro-AMP and then transferred to the acceptor end of tRNA(Pro). As ProRS can inadvertently accommodate and process non-cognate amino acids such as alanine and cysteine, to avoid such errors it has two additional distinct editing activities against alanine. One activity is designated as 'pretransfer' editing and involves the tRNA(Pro)-independent hydrolysis of activated Ala-AMP. The other activity is designated 'posttransfer' editing and involves deacylation of mischarged Ala-tRNA(Pro). The misacylated Cys-tRNA(Pro) is not edited by ProRS. In Lysinibacillus sphaericus (strain C3-41), this protein is Proline--tRNA ligase.